The chain runs to 229 residues: UPF0758 protein Cagg_0777 (229 aa).

In terms of domain architecture, MPN spans 105-227; that stretch reads PIRSPGDVAA…YVSLRERGIG (123 aa). His176, His178, and Asp189 together coordinate Zn(2+). Residues 176–189 carry the JAMM motif motif; it reads HNHPSGEATPSPED.

It belongs to the UPF0758 family.

In Chloroflexus aggregans (strain MD-66 / DSM 9485), this protein is UPF0758 protein Cagg_0777.